A 115-amino-acid polypeptide reads, in one-letter code: U3-lycotoxin-Ls1d (115 aa).

Positions 1-20 are cleaved as a signal peptide; that stretch reads MKFVLLFGVLLVTLFSYSSA. Residues 21–44 constitute a propeptide that is removed on maturation; it reads EMLDDFDQADEDELLSLIEKEEAR. 4 disulfide bridges follow: C48-C63, C55-C72, C62-C87, and C74-C85.

It belongs to the neurotoxin 19 (CSTX) family. 01 subfamily. As to expression, expressed by the venom gland.

The protein localises to the secreted. The protein is U3-lycotoxin-Ls1d of Lycosa singoriensis (Wolf spider).